The sequence spans 424 residues: O-methyltransferase aunD (424 aa).

An S-adenosyl-L-methionine-binding site is contributed by Asp-275. The active-site Proton acceptor is His-326.

Belongs to the class I-like SAM-binding methyltransferase superfamily. Cation-independent O-methyltransferase family.

Its pathway is secondary metabolite biosynthesis. O-methyltransferase; part of the gene cluster that mediates the biosynthesis of aurasperone B, a dimeric gamma-naphthopyrone. The first step in the biosynthesis of aurasperone B is the production of gamma-naphthopyrone precursor YWA1 by the non-reducing polyketide synthase albA, via condensation of one acetyl-CoA starter unit with 6 malonyl-CoA units. YWA1 is then methylated by aunE at position C-6 to yield foncesin which is further methylated at position C-8 by aunD to produce fonsecin B. A key enzyme in the biosynthetic pathway is the cytochrome P450 monooxygenase aunB which catalyzes the oxidative dimerization of fonsecin B to aurasperone B. AunB also catalyzes the oxidative dimerization of rubrofusarin B into aurasperone A. This chain is O-methyltransferase aunD, found in Aspergillus niger (strain ATCC 1015 / CBS 113.46 / FGSC A1144 / LSHB Ac4 / NCTC 3858a / NRRL 328 / USDA 3528.7).